Reading from the N-terminus, the 274-residue chain is Thiamine kinase (274 aa).

Belongs to the thiamine kinase family.

The enzyme catalyses thiamine + ATP = thiamine phosphate + ADP + H(+). It participates in cofactor biosynthesis; thiamine diphosphate biosynthesis; thiamine phosphate from thiamine: step 1/1. Catalyzes the ATP-dependent phosphorylation of thiamine to thiamine phosphate. Is involved in thiamine salvage. This chain is Thiamine kinase, found in Salmonella choleraesuis (strain SC-B67).